The sequence spans 313 residues: Dimethyladenosine transferase (313 aa).

Residues 1–22 (MPKIKSAASGRRRERQQQRGQL) are disordered. Residues histidine 37, leucine 39, glycine 64, glutamate 85, aspartate 113, and asparagine 128 each coordinate S-adenosyl-L-methionine.

Belongs to the class I-like SAM-binding methyltransferase superfamily. rRNA adenine N(6)-methyltransferase family. As to quaternary structure, part of the small subunit (SSU) processome, composed of more than 70 proteins and the RNA chaperone small nucleolar RNA (snoRNA) U3.

It is found in the nucleus. Its subcellular location is the nucleoplasm. The protein resides in the nucleolus. The enzyme catalyses adenosine(1779)/adenosine(1780) in 18S rRNA + 4 S-adenosyl-L-methionine = N(6)-dimethyladenosine(1779)/N(6)-dimethyladenosine(1780) in 18S rRNA + 4 S-adenosyl-L-homocysteine + 4 H(+). Its function is as follows. Specifically dimethylates two adjacent adenosines in the loop of a conserved hairpin near the 3'-end of 18S rRNA in the 40S particle. Involved in the pre-rRNA processing steps leading to small-subunit rRNA production independently of its RNA-modifying catalytic activity. Part of the small subunit (SSU) processome, first precursor of the small eukaryotic ribosomal subunit. During the assembly of the SSU processome in the nucleolus, many ribosome biogenesis factors, an RNA chaperone and ribosomal proteins associate with the nascent pre-rRNA and work in concert to generate RNA folding, modifications, rearrangements and cleavage as well as targeted degradation of pre-ribosomal RNA by the RNA exosome. The chain is Dimethyladenosine transferase (DIMT1) from Bos taurus (Bovine).